A 267-amino-acid polypeptide reads, in one-letter code: Hydroxynaphthalene reductase-like protein Arp2 (267 aa).

Positions 25, 45, 71, and 98 each coordinate NADP(+). Residues S147 and S148 each act as proton donor in the active site. Residues Y162, K166, V195, and T197 each contribute to the NADP(+) site. Y162 functions as the Proton acceptor in the catalytic mechanism. K166 acts as the Lowers pKa of active site Tyr in catalysis.

The protein belongs to the short-chain dehydrogenases/reductases (SDR) family.

In terms of biological role, hydroxynaphthalene reductase-like protein; part of the Pks2 gene cluster that mediates the formation of infectious structures (appressoria), enabling these fungi to kill insects faster. The product of the Pks2 gene cluster is different from the one of Pks1 and has still not been identified. The sequence is that of Hydroxynaphthalene reductase-like protein Arp2 from Metarhizium robertsii (strain ARSEF 23 / ATCC MYA-3075) (Metarhizium anisopliae (strain ARSEF 23)).